The sequence spans 332 residues: 3-ketodihydrosphingosine reductase (332 aa).

The signal sequence occupies residues M1–P25. Residues K26–D270 are Cytoplasmic-facing. Residues G39, S41, S42, G43, R64, K68, and D93 each contribute to the NADPH site. The GXSXG motif lies at G39–G43. S172 (proton donor) is an active-site residue. Y186 serves as the catalytic Proton acceptor. Y186 and K190 together coordinate NADP(+). K190 serves as the catalytic Lowers pKa of active site Tyr. Residues G271–L291 form a helical membrane-spanning segment. Residues Q292–Q293 lie on the Lumenal side of the membrane. A helical transmembrane segment spans residues V294 to I314. Over V315–A332 the chain is Cytoplasmic.

This sequence belongs to the short-chain dehydrogenases/reductases (SDR) family.

It is found in the endoplasmic reticulum membrane. The catalysed reaction is sphinganine + NADP(+) = 3-oxosphinganine + NADPH + H(+). Its pathway is lipid metabolism; sphingolipid metabolism. Functionally, catalyzes the reduction of 3'-oxosphinganine (3-ketodihydrosphingosine/KDS) to sphinganine (dihydrosphingosine/DHS), the second step of de novo sphingolipid biosynthesis. The chain is 3-ketodihydrosphingosine reductase (Kdsr) from Mus musculus (Mouse).